The primary structure comprises 336 residues: ATP-dependent 6-phosphofructokinase (336 aa).

Residue Gly-11 coordinates ATP. Arg-21–Arg-25 lines the ADP pocket. Residues Arg-72–Tyr-73 and Gly-102–Ser-105 each bind ATP. Mg(2+) is bound at residue Asp-103. Thr-125–Asp-127 contributes to the substrate binding site. Asp-127 acts as the Proton acceptor in catalysis. Arg-154 lines the ADP pocket. Residues Arg-162 and Met-169–Arg-171 contribute to the substrate site. ADP-binding positions include Gly-185–Asp-187, Lys-211, and Lys-213–His-215. Residues Glu-222, Arg-244, and His-250–Arg-253 contribute to the substrate site.

The protein belongs to the phosphofructokinase type A (PFKA) family. ATP-dependent PFK group I subfamily. Prokaryotic clade 'B1' sub-subfamily. Homotetramer. It depends on Mg(2+) as a cofactor.

It is found in the cytoplasm. The enzyme catalyses beta-D-fructose 6-phosphate + ATP = beta-D-fructose 1,6-bisphosphate + ADP + H(+). Its pathway is carbohydrate degradation; glycolysis; D-glyceraldehyde 3-phosphate and glycerone phosphate from D-glucose: step 3/4. Allosterically activated by ADP and other diphosphonucleosides, and allosterically inhibited by phosphoenolpyruvate. Its function is as follows. Catalyzes the phosphorylation of D-fructose 6-phosphate to fructose 1,6-bisphosphate by ATP, the first committing step of glycolysis. This is ATP-dependent 6-phosphofructokinase from Streptococcus suis (strain 05ZYH33).